The sequence spans 262 residues: Phycoerythrobilin:ferredoxin oxidoreductase (262 aa).

It belongs to the HY2 family.

The enzyme catalyses (3Z)-phycoerythrobilin + oxidized 2[4Fe-4S]-[ferredoxin] = 15,16-dihydrobiliverdin + reduced 2[4Fe-4S]-[ferredoxin] + 2 H(+). In terms of biological role, catalyzes the two-electron reduction of the C2 and C3(1) diene system of 15,16-dihydrobiliverdin. The chain is Phycoerythrobilin:ferredoxin oxidoreductase from Synechococcus sp. (strain RCC307).